Here is a 456-residue protein sequence, read N- to C-terminus: NADH oxidase (456 aa).

Asparagine 10 serves as a coordination point for FAD. The active-site Proton acceptor is the histidine 11. FAD-binding residues include alanine 12, aspartate 34, glutamine 35, cysteine 44, valine 81, alanine 110, serine 113, lysine 143, and tyrosine 170. Cysteine 44 (redox-active) is an active-site residue. Cysteine sulfinic acid (-SO2H) is present on cysteine 44. Positions 171, 190, 199, and 254 each coordinate NAD(+). Aspartate 292 contacts FAD. Position 308 (alanine 308) interacts with NAD(+). The FAD site is built by leucine 309, alanine 310, and serine 311. Residue glycine 339 participates in NAD(+) binding. Residue phenylalanine 436 participates in FAD binding.

It depends on FAD as a cofactor.

It carries out the reaction 2 NADH + O2 + 2 H(+) = 2 NAD(+) + 2 H2O. Its function is as follows. Catalyzes the four-electron reduction of molecular oxygen to water. This Streptococcus pyogenes serotype M6 (strain ATCC BAA-946 / MGAS10394) protein is NADH oxidase.